We begin with the raw amino-acid sequence, 193 residues long: Ras-like protein 2 (193 aa).

12 to 19 (GGGGVGKS) contacts GTP. Residues 34 to 42 (YDPTIEDSY) carry the Effector region motif. GTP contacts are provided by residues 59 to 63 (DTAGQ) and 118 to 121 (NKCD). Cys-190 carries the post-translational modification Cysteine methyl ester. Cys-190 carries S-geranylgeranyl cysteine lipidation. Residues 191–193 (KLL) constitute a propeptide, removed in mature form.

It belongs to the small GTPase superfamily. Ras family.

Its subcellular location is the cell membrane. It carries out the reaction GTP + H2O = GDP + phosphate + H(+). Ras proteins bind GDP/GTP and possess intrinsic GTPase activity. The chain is Ras-like protein 2 (RAS-2) from Physarum polycephalum (Slime mold).